A 226-amino-acid polypeptide reads, in one-letter code: Deoxyribose-phosphate aldolase (226 aa).

Aspartate 95 acts as the Proton donor/acceptor in catalysis. The active-site Schiff-base intermediate with acetaldehyde is the lysine 157. Lysine 186 functions as the Proton donor/acceptor in the catalytic mechanism.

This sequence belongs to the DeoC/FbaB aldolase family. DeoC type 1 subfamily.

Its subcellular location is the cytoplasm. It catalyses the reaction 2-deoxy-D-ribose 5-phosphate = D-glyceraldehyde 3-phosphate + acetaldehyde. It participates in carbohydrate degradation; 2-deoxy-D-ribose 1-phosphate degradation; D-glyceraldehyde 3-phosphate and acetaldehyde from 2-deoxy-alpha-D-ribose 1-phosphate: step 2/2. With respect to regulation, partially inhibited by acetaldehyde. After incubation for 2, 4 and 6 hours in 300 mM acetaldehyde at 25 degrees Celsius, retains approximately 61.32%, 42.33% and 34.73% of the initial 2-deoxy-D-ribose-5-phosphate (DR5P) cleavage activity, respectively. In terms of biological role, catalyzes a reversible aldol reaction between acetaldehyde and D-glyceraldehyde 3-phosphate to generate 2-deoxy-D-ribose 5-phosphate. In vitro, DERA can catalyze the aldol condensation of chloroacetaldehyde (CHAD) and acetaldehyde (ACD), yielding (S)-4-chloro-3-hydroxybutanal ((S)-CHB), which can combine with another aldehyde to form (3R,5S)-6-chloro-2,4,6-trideoxyhexapyranose (CTeHP), a key intermediate for statin drugs. The protein is Deoxyribose-phosphate aldolase of Pseudomonas syringae pv. syringae (strain B728a).